A 389-amino-acid chain; its full sequence is Chalcone synthase (389 aa).

Residue Cys-164 is part of the active site.

This sequence belongs to the thiolase-like superfamily. Chalcone/stilbene synthases family.

The catalysed reaction is (E)-4-coumaroyl-CoA + 3 malonyl-CoA + 3 H(+) = 2',4,4',6'-tetrahydroxychalcone + 3 CO2 + 4 CoA. It functions in the pathway secondary metabolite biosynthesis; flavonoid biosynthesis. In terms of biological role, the primary product of this enzyme is 4,2',4',6'-tetrahydroxychalcone (also termed naringenin-chalcone or chalcone) which can under specific conditions spontaneously isomerize into naringenin. The polypeptide is Chalcone synthase (CHS) (Hydrangea macrophylla (Bigleaf hydrangea)).